The sequence spans 630 residues: Elongation factor 4 (630 aa).

Positions 1-22 are disordered; it reads MTVARNRAGAGPGKGSPISSFA. The tr-type G domain occupies 30–211; that stretch reads ARIRNFCIIA…EVVRQVPAPV (182 aa). GTP-binding positions include 42 to 47 and 158 to 161; these read DHGKST and NKID.

It belongs to the TRAFAC class translation factor GTPase superfamily. Classic translation factor GTPase family. LepA subfamily.

The protein localises to the cell membrane. The enzyme catalyses GTP + H2O = GDP + phosphate + H(+). Its function is as follows. Required for accurate and efficient protein synthesis under certain stress conditions. May act as a fidelity factor of the translation reaction, by catalyzing a one-codon backward translocation of tRNAs on improperly translocated ribosomes. Back-translocation proceeds from a post-translocation (POST) complex to a pre-translocation (PRE) complex, thus giving elongation factor G a second chance to translocate the tRNAs correctly. Binds to ribosomes in a GTP-dependent manner. This is Elongation factor 4 from Rhodococcus jostii (strain RHA1).